Consider the following 60-residue polypeptide: Mastoparan-VT6 (60 aa).

The first 27 residues, Met-1 to Ala-27, serve as a signal peptide directing secretion. AXPX repeat units follow at residues Ala-27–Lys-30, Ala-31–Leu-34, Ala-35–Asn-38, and Ala-41–Glu-44. The propeptide occupies Asp-28–Ala-45. Leu-59 is subject to Leucine amide.

It belongs to the MCD family. Mastoparan subfamily. Expressed by the venom gland.

It localises to the secreted. Its function is as follows. The synthetic peptide shows antimicrobial activities against Gram-negative bacteria (but not against all strains tested), Gram-positive bacteria (all strains tested) and the fungi C.albicans and C.parapsilosis. Exhibits little hemolytic activity against washed human erythrocytes. This Vespa tropica (Greater banded hornet) protein is Mastoparan-VT6.